The chain runs to 1450 residues: Protein TIC 214 (1450 aa).

6 consecutive transmembrane segments (helical) span residues 29–49 (FGLYYGFLTTLPISFSHIVVI), 61–81 (VMAFCGLITGQLCMIGTIYYT), 86–106 (LFIKPHLILLLSIIYSFFYWQ), 132–152 (FFDSFVFQILNPILLPTPIFF), 166–186 (LNFFLSFFIGSLIGNFLFFNA), and 213–233 (IIPIVFCICLIPIAKYSHIPF).

The protein belongs to the TIC214 family. Part of the Tic complex.

The protein resides in the plastid. It is found in the chloroplast inner membrane. Its function is as follows. Involved in protein precursor import into chloroplasts. May be part of an intermediate translocation complex acting as a protein-conducting channel at the inner envelope. The chain is Protein TIC 214 from Chaetosphaeridium globosum (Charophycean green alga).